Consider the following 492-residue polypeptide: MGSCCSCLNRDSVPDNHPTKFKVTNVDDEGVELGSGVMELTQSELVLHLHRREAVRWPYLCLRRYGYDSNLFSFESGRRCQTGQGIFAFKCSRAEEIFNLLQDLMQCNSINVMEEPVIITRNSHPAELDLPRAPQPPNALGYTVSSFSNGCPGEGPRFSAPRRLSTSSLRHPSLGEESTHALIAPDEQSHTYVNTPASEDDHRRGRHCLQPLPEGQAPFLPQARGPDQRDPQVFLQPGQVKFVLGPTPARRHMVKCQGLCPSLHDPPHHNNNNEAPSECPAQPKCTYENVTGGLWRGAGWRLSPEEPGWNGLAHRRAALLHYENLPPLPPVWESQAQQLGGEAGDDGDSRDGLTPSSNGFPDGEEDETPLQKPTSTRAAIRSHGSFPVPLTRRRGSPRVFNFDFRRPGPEPPRQLNYIQVELKGWGGDRPKGPQNPSSPQAPMPTTHPARSSDSYAVIDLKKTVAMSNLQRALPRDDGTARKTRHNSTDLPL.

Glycine 2 carries the N-myristoyl glycine lipid modification. The 103-residue stretch at 13–115 (VPDNHPTKFK…QCNSINVMEE (103 aa)) folds into the IRS-type PTB domain. 3 disordered regions span residues 153 to 173 (GEGPRFSAPRRLSTSSLRHPS), 338 to 455 (QLGG…SDSY), and 467 to 492 (SNLQRALPRDDGTARKTRHNSTDLPL).

In terms of assembly, binds NTRK1. Binds FGFR1, NGFR, GRB2, PTPN11 and ERK2. Phosphorylated by ULK2 in vitro. Phosphorylated on tyrosine residues upon stimulation by BFGF or NGFB.

The protein localises to the membrane. Functionally, adapter protein that links FGF and NGF receptors to downstream signaling pathways. Involved in the activation of MAP kinases. Down-regulates ERK2 signaling by interfering with the phosphorylation and nuclear translocation of ERK2. This chain is Fibroblast growth factor receptor substrate 3 (FRS3), found in Homo sapiens (Human).